The chain runs to 157 residues: Ribosome maturation factor RimP (157 aa).

This sequence belongs to the RimP family.

It localises to the cytoplasm. Functionally, required for maturation of 30S ribosomal subunits. In Geobacillus sp. (strain WCH70), this protein is Ribosome maturation factor RimP.